A 134-amino-acid polypeptide reads, in one-letter code: Ribosome-binding factor A (134 aa).

The protein belongs to the RbfA family. Monomer. Binds 30S ribosomal subunits, but not 50S ribosomal subunits or 70S ribosomes.

Its subcellular location is the cytoplasm. In terms of biological role, one of several proteins that assist in the late maturation steps of the functional core of the 30S ribosomal subunit. Associates with free 30S ribosomal subunits (but not with 30S subunits that are part of 70S ribosomes or polysomes). Required for efficient processing of 16S rRNA. May interact with the 5'-terminal helix region of 16S rRNA. This is Ribosome-binding factor A from Rhizobium leguminosarum bv. trifolii (strain WSM2304).